The primary structure comprises 630 residues: Sorting nexin-4 (630 aa).

Composition is skewed to polar residues over residues 1–11 (MSSEDQFTSIQ) and 19–28 (NTNNTPTDTT). The segment at 1-143 (MSSEDQFTSI…QQPQQQLASI (143 aa)) is disordered. Over residues 32 to 49 (KSSKSKKSKKSSSKKKNG) the composition is skewed to basic residues. A compositionally biased stretch (low complexity) spans 50-60 (NKISPSSTTET). Residues 81-94 (DDNHEVDDGNKEQN) are compositionally biased toward basic and acidic residues. Over residues 130-143 (QQQLQQPQQQLASI) the composition is skewed to low complexity. The 135-residue stretch at 187–321 (SIKTTVTHPN…HLFISNSNDW (135 aa)) folds into the PX domain. The a 1,2-diacyl-sn-glycero-3-phospho-(1D-myo-inositol-3-phosphate) site is built by arginine 243, lysine 269, and arginine 288. 2 coiled-coil regions span residues 361–413 (SKHK…SNQI) and 550–581 (TIKSDKIKNLEQEIAKETKILTDLTNKIINEE).

The protein belongs to the sorting nexin family.

It is found in the cytoplasm. Its subcellular location is the cytosol. The protein localises to the preautophagosomal structure membrane. The protein resides in the endosome membrane. In terms of biological role, sorting nexin, involved in the separation or division of vacuoles throughout the entire life cycle of the cells. Involved in retrieval of late-Golgi SNAREs from post-Golgi endosomes to the trans-Golgi network, for cytoplasm to vacuole transport (Cvt), and autophagy of large cargos including mitophagy, pexophagy and glycophagy. The chain is Sorting nexin-4 (SNX4) from Candida albicans (strain SC5314 / ATCC MYA-2876) (Yeast).